The primary structure comprises 259 residues: Cysteine protease IpaJ (259 aa).

Catalysis depends on residues Cys64, His206, and Asp218.

The protein localises to the secreted. It localises to the host cytoplasm. In terms of biological role, virulence factor that eliminates N-myristoyl protein modifications in infected host cells. Acts as a cysteine protease that cleaves the peptide bond between N-myristoylated Gly-2 and Asn-3 of human ARF1, leading to the elimination of the myristoyl group and alteration of protein trafficking in host cell. Could also cleave an array of N-myristoylated host proteins involved in cellular growth, signal transduction, autophagasome maturation and organelle function. This is Cysteine protease IpaJ (ipaJ) from Shigella flexneri.